The following is a 489-amino-acid chain: Membrane-bound acylglycerophosphatidylinositol O-acyltransferase frj (489 aa).

3 helical membrane passes run 2–22, 40–60, and 75–95; these read SIDD…GSYV, VLVV…SLAL, and LVTF…DFYF. Active-site residues include N331 and H364. 2 consecutive transmembrane segments (helical) span residues 405–425 and 433–453; these read VIFW…FLLS and FYSS…ALGF.

It belongs to the membrane-bound acyltransferase family.

It is found in the membrane. The enzyme catalyses a 1-acyl-sn-glycero-3-phospho-(1D-myo-inositol) + (5Z,8Z,11Z,14Z)-eicosatetraenoyl-CoA = a 1-acyl-2-(5Z,8Z,11Z,14Z-eicosatetraenoyl)-sn-glycero-3-phospho-(1D-myo-inositol) + CoA. It catalyses the reaction a 1-acyl-sn-glycero-3-phosphocholine + an acyl-CoA = a 1,2-diacyl-sn-glycero-3-phosphocholine + CoA. It carries out the reaction (9Z)-hexadecenoyl-CoA + 1-hexadecanoyl-sn-glycero-3-phosphocholine = 1-hexadecanoyl-2-(9Z-hexadecenoyl)-sn-glycero-3-phosphocholine + CoA. The catalysed reaction is a 1-acyl-sn-glycero-3-phospho-L-serine + an acyl-CoA = a 1,2-diacyl-sn-glycero-3-phospho-L-serine + CoA. The enzyme catalyses 1-(9Z-octadecenoyl)-sn-glycero-3-phospho-L-serine + (9Z)-hexadecenoyl-CoA = 1-(9Z-octadecenoyl)-2-(9Z-hexadecenoyl)-sn-glycero-3-phospho-L-serine + CoA. It catalyses the reaction a 1-acyl-sn-glycero-3-phosphoethanolamine + an acyl-CoA = a 1,2-diacyl-sn-glycero-3-phosphoethanolamine + CoA. It carries out the reaction 1-hexadecanoyl-sn-glycero-3-phosphoethanolamine + (9Z)-hexadecenoyl-CoA = 1-hexadecanoyl-2-(9Z)-hexadecenoyl-sn-glycero-3-phosphoethanolamine + CoA. The protein operates within lipid metabolism; phospholipid metabolism. In terms of biological role, acyltransferase that mediates the acylation of lysophospholipids to produce phospholipids (glycerophospholipids). Highest activity with lysophosphatidylinositol (1-acyl-sn-glycero-3-phospho-(1D-myo-inositol) or LPI) producing phosphatidylinositol (1,2-diacyl-sn-glycero-3-phospho-(1D-myo-inositol) or PI) (LPIAT activity), but also converts lysophosphatidylcholine (1-acyl-sn-glycero-3-phosphocholine or LPC) to phosphatidylcholine (1,2-diacyl-sn-glycero-3-phosphocholine or PC) (LPCAT activity), lysophosphatidylserine (1-acyl-2-hydroxy-sn-glycero-3-phospho-L-serine or LPS) to phosphatidylserine (1,2-diacyl-sn-glycero-3-phospho-L-serine or PS) (LPSAT activity), and lysophosphatidylethanolamine (1-acyl-sn-glycero-3-phosphoethanolamine or LPE) producing phosphatidylethanolamine (1,2-diacyl-sn-glycero-3-phosphoethanolamine or PE) (LPEAT activity). Has a preference for unsaturated fatty acid arachidonoyl-CoA ((5Z,8Z,11Z,14Z)-eicosatetraenoyl-CoA). Glycerophospholipids are important structural and functional components of cellular membrane, acyl-chain remodeling regulates the molecular species distribution of glycerophospholipids which can affect membrane fluidity and curvature. In Drosophila melanogaster (Fruit fly), this protein is Membrane-bound acylglycerophosphatidylinositol O-acyltransferase frj.